The chain runs to 129 residues: Small ribosomal subunit protein uS12 (129 aa).

At Asp-89 the chain carries 3-methylthioaspartic acid.

This sequence belongs to the universal ribosomal protein uS12 family. As to quaternary structure, part of the 30S ribosomal subunit. Contacts proteins S8 and S17. May interact with IF1 in the 30S initiation complex.

Its function is as follows. With S4 and S5 plays an important role in translational accuracy. Functionally, interacts with and stabilizes bases of the 16S rRNA that are involved in tRNA selection in the A site and with the mRNA backbone. Located at the interface of the 30S and 50S subunits, it traverses the body of the 30S subunit contacting proteins on the other side and probably holding the rRNA structure together. The combined cluster of proteins S8, S12 and S17 appears to hold together the shoulder and platform of the 30S subunit. This is Small ribosomal subunit protein uS12 from Helicobacter hepaticus (strain ATCC 51449 / 3B1).